A 1517-amino-acid polypeptide reads, in one-letter code: Neurite extension and migration factor (1517 aa).

Basic and acidic residues predominate over residues 381 to 405 (DKKKGKEEVHEDKSIEKKDEKDNGE). Disordered regions lie at residues 381–416 (DKKKGKEEVHEDKSIEKKDEKDNGEKPALNNKPCSG), 505–529 (VNERKEWPPGGSKEEDDDEWCPKKR), 644–697 (SMEA…GLIG), 732–775 (KKIK…HMSE), 1065–1084 (RHSSLSEMSPPDTPSLSPQS), 1161–1228 (DEPA…KKGK), and 1372–1422 (AGTP…SSED). The segment covering 644–663 (SMEASASSKQVSFGSDQKQA) has biased composition (polar residues). Low complexity predominate over residues 678-687 (SALLAAPSSA). A compositionally biased stretch (polar residues) spans 764–773 (TPGTSNSSHM).

It is found in the nucleus. The protein localises to the cytoplasm. Involved in neurite outgrowth by regulating cell-cell adhesion via the N-cadherin signaling pathway. May act by regulating expression of protein-coding genes, such as N-cadherins and integrin beta-1 (ITGB1). The polypeptide is Neurite extension and migration factor (Rattus norvegicus (Rat)).